The sequence spans 429 residues: Bifunctional protein GlmU (429 aa).

The segment at 1–223 (MKTSILILAA…EDEFMGINDK (223 aa)) is pyrophosphorylase. UDP-N-acetyl-alpha-D-glucosamine-binding positions include 8–11 (LAAG), Lys-22, and 81–82 (GT). Asp-102 contributes to the Mg(2+) binding site. Positions 135, 149, 164, and 221 each coordinate UDP-N-acetyl-alpha-D-glucosamine. Asn-221 serves as a coordination point for Mg(2+). Positions 224-244 (FELSIAENFMQEKIKKYWMQQ) are linker. The segment at 245–429 (GVIFHLPQST…KDYYYKKFQK (185 aa)) is N-acetyltransferase. Positions 308 and 325 each coordinate UDP-N-acetyl-alpha-D-glucosamine. His-336 (proton acceptor) is an active-site residue. UDP-N-acetyl-alpha-D-glucosamine-binding residues include Tyr-339 and Asn-350. Acetyl-CoA is bound by residues 359–360 (NY), Ser-378, Ala-396, and Arg-413.

The protein in the N-terminal section; belongs to the N-acetylglucosamine-1-phosphate uridyltransferase family. This sequence in the C-terminal section; belongs to the transferase hexapeptide repeat family. In terms of assembly, homotrimer. Mg(2+) serves as cofactor.

The protein resides in the cytoplasm. It carries out the reaction alpha-D-glucosamine 1-phosphate + acetyl-CoA = N-acetyl-alpha-D-glucosamine 1-phosphate + CoA + H(+). The enzyme catalyses N-acetyl-alpha-D-glucosamine 1-phosphate + UTP + H(+) = UDP-N-acetyl-alpha-D-glucosamine + diphosphate. The protein operates within nucleotide-sugar biosynthesis; UDP-N-acetyl-alpha-D-glucosamine biosynthesis; N-acetyl-alpha-D-glucosamine 1-phosphate from alpha-D-glucosamine 6-phosphate (route II): step 2/2. It participates in nucleotide-sugar biosynthesis; UDP-N-acetyl-alpha-D-glucosamine biosynthesis; UDP-N-acetyl-alpha-D-glucosamine from N-acetyl-alpha-D-glucosamine 1-phosphate: step 1/1. It functions in the pathway bacterial outer membrane biogenesis; LPS lipid A biosynthesis. Functionally, catalyzes the last two sequential reactions in the de novo biosynthetic pathway for UDP-N-acetylglucosamine (UDP-GlcNAc). The C-terminal domain catalyzes the transfer of acetyl group from acetyl coenzyme A to glucosamine-1-phosphate (GlcN-1-P) to produce N-acetylglucosamine-1-phosphate (GlcNAc-1-P), which is converted into UDP-GlcNAc by the transfer of uridine 5-monophosphate (from uridine 5-triphosphate), a reaction catalyzed by the N-terminal domain. The sequence is that of Bifunctional protein GlmU from Campylobacter jejuni subsp. jejuni serotype O:23/36 (strain 81-176).